The sequence spans 199 residues: Dephospho-CoA kinase (199 aa).

The 197-residue stretch at 3-199 (VIGLTGSIGM…AAAKMPRRRS (197 aa)) folds into the DPCK domain. 11-16 (GMGKST) lines the ATP pocket.

This sequence belongs to the CoaE family.

Its subcellular location is the cytoplasm. The enzyme catalyses 3'-dephospho-CoA + ATP = ADP + CoA + H(+). The protein operates within cofactor biosynthesis; coenzyme A biosynthesis; CoA from (R)-pantothenate: step 5/5. In terms of biological role, catalyzes the phosphorylation of the 3'-hydroxyl group of dephosphocoenzyme A to form coenzyme A. In Nitrobacter winogradskyi (strain ATCC 25391 / DSM 10237 / CIP 104748 / NCIMB 11846 / Nb-255), this protein is Dephospho-CoA kinase.